Consider the following 412-residue polypeptide: L-cysteine:1D-myo-inositol 2-amino-2-deoxy-alpha-D-glucopyranoside ligase (412 aa).

The tract at residues methionine 1–arginine 30 is disordered. Cysteine 43 contributes to the Zn(2+) binding site. Residues cysteine 43 to threonine 46, threonine 58, and asparagine 81 to threonine 83 contribute to the L-cysteinyl-5'-AMP site. Positions isoleucine 45–histidine 55 match the 'HIGH' region motif. Positions glutamate 187–proline 192 match the 'ERGGDP' region motif. Position 227 (tryptophan 227) interacts with L-cysteinyl-5'-AMP. Cysteine 231 contributes to the Zn(2+) binding site. Glycine 249 to aspartate 251 contributes to the L-cysteinyl-5'-AMP binding site. A Zn(2+)-binding site is contributed by histidine 256. Isoleucine 283 contacts L-cysteinyl-5'-AMP. The 'KMSKS' region signature appears at lysine 289–serine 293.

It belongs to the class-I aminoacyl-tRNA synthetase family. MshC subfamily. Monomer. Zn(2+) serves as cofactor.

It catalyses the reaction 1D-myo-inositol 2-amino-2-deoxy-alpha-D-glucopyranoside + L-cysteine + ATP = 1D-myo-inositol 2-(L-cysteinylamino)-2-deoxy-alpha-D-glucopyranoside + AMP + diphosphate + H(+). Its function is as follows. Catalyzes the ATP-dependent condensation of GlcN-Ins and L-cysteine to form L-Cys-GlcN-Ins. This is L-cysteine:1D-myo-inositol 2-amino-2-deoxy-alpha-D-glucopyranoside ligase from Actinosynnema mirum (strain ATCC 29888 / DSM 43827 / JCM 3225 / NBRC 14064 / NCIMB 13271 / NRRL B-12336 / IMRU 3971 / 101).